A 103-amino-acid chain; its full sequence is Truncated secreted TNF-receptor-like protein A53 (103 aa).

A TNFR-Cys 1 repeat occupies Ser36–Glu73. 3 disulfides stabilise this stretch: Cys37/Cys50, Cys51/Cys64, and Cys54/Cys72. The TNFR-Cys 2; truncated repeat unit spans residues Arg74 to Arg103.

Belongs to the poxviridae A53R protein family.

The sequence is that of Truncated secreted TNF-receptor-like protein A53 from Vaccinia virus (strain Copenhagen) (VACV).